A 406-amino-acid chain; its full sequence is uncharacterized protein (406 aa).

Helical transmembrane passes span Ser7–Ile27, Val43–Ile63, Leu69–Leu89, Leu98–Leu118, Gly155–Phe175, Ile220–Leu240, Trp253–Tyr273, Leu297–Met317, Val352–Val372, and Leu374–Leu394.

The protein belongs to the major facilitator superfamily.

Its subcellular location is the cell membrane. This is an uncharacterized protein from Bacillus subtilis (strain 168).